The following is a 341-amino-acid chain: Ras association domain-containing protein 6 (341 aa).

Ser-155 is subject to Phosphoserine. The Ras-associating domain maps to 190-278 (YDHETSIFTP…ARIFLMDKDA (89 aa)). An SARAH domain is found at 285-332 (VAPYINFHFSFLKSILQRLDEEEKMEIERIMAKFNTERAFILKCLQSK).

Interacts with MOAP1. Interaction with activated KRAS is still a matter of debate.

Functionally, involved in the induction of apoptosis. May act as a Ras effector protein. May suppress the serum-induced basal levels of NF-kappa-B. This Rattus norvegicus (Rat) protein is Ras association domain-containing protein 6 (Rassf6).